Here is a 240-residue protein sequence, read N- to C-terminus: tRNA1(Val) (adenine(37)-N6)-methyltransferase (240 aa).

The protein belongs to the methyltransferase superfamily. tRNA (adenine-N(6)-)-methyltransferase family.

It localises to the cytoplasm. The catalysed reaction is adenosine(37) in tRNA1(Val) + S-adenosyl-L-methionine = N(6)-methyladenosine(37) in tRNA1(Val) + S-adenosyl-L-homocysteine + H(+). Specifically methylates the adenine in position 37 of tRNA(1)(Val) (anticodon cmo5UAC). The sequence is that of tRNA1(Val) (adenine(37)-N6)-methyltransferase from Christiangramia forsetii (strain DSM 17595 / CGMCC 1.15422 / KT0803) (Gramella forsetii).